We begin with the raw amino-acid sequence, 357 residues long: 3-isopropylmalate dehydrogenase (357 aa).

Residue 75-88 coordinates NAD(+); the sequence is GPKWEHLPPAEQPE. Positions 96, 106, 135, and 224 each coordinate substrate. Mg(2+)-binding residues include Asp224, Asp248, and Asp252. 282-294 is a binding site for NAD(+); that stretch reads GSAPDIAGQGIAN.

It belongs to the isocitrate and isopropylmalate dehydrogenases family. LeuB type 1 subfamily. In terms of assembly, homodimer. Mg(2+) serves as cofactor. It depends on Mn(2+) as a cofactor.

Its subcellular location is the cytoplasm. It carries out the reaction (2R,3S)-3-isopropylmalate + NAD(+) = 4-methyl-2-oxopentanoate + CO2 + NADH. It participates in amino-acid biosynthesis; L-leucine biosynthesis; L-leucine from 3-methyl-2-oxobutanoate: step 3/4. Functionally, catalyzes the oxidation of 3-carboxy-2-hydroxy-4-methylpentanoate (3-isopropylmalate) to 3-carboxy-4-methyl-2-oxopentanoate. The product decarboxylates to 4-methyl-2 oxopentanoate. This chain is 3-isopropylmalate dehydrogenase, found in Desulfotalea psychrophila (strain LSv54 / DSM 12343).